The chain runs to 252 residues: Hydroxyacylglutathione hydrolase (252 aa).

Zn(2+) contacts are provided by His54, His56, Asp58, His59, His111, Asp128, and His166.

It belongs to the metallo-beta-lactamase superfamily. Glyoxalase II family. As to quaternary structure, monomer. It depends on Zn(2+) as a cofactor.

It carries out the reaction an S-(2-hydroxyacyl)glutathione + H2O = a 2-hydroxy carboxylate + glutathione + H(+). It participates in secondary metabolite metabolism; methylglyoxal degradation; (R)-lactate from methylglyoxal: step 2/2. Its function is as follows. Thiolesterase that catalyzes the hydrolysis of S-D-lactoyl-glutathione to form glutathione and D-lactic acid. The polypeptide is Hydroxyacylglutathione hydrolase (Aliivibrio fischeri (strain ATCC 700601 / ES114) (Vibrio fischeri)).